A 260-amino-acid polypeptide reads, in one-letter code: Phosphate import ATP-binding protein PstB (260 aa).

The ABC transporter domain maps to 14–255 (VQVKNLAFYY…PRNKQTEDYI (242 aa)). Residue 46–53 (GPSGCGKS) participates in ATP binding.

This sequence belongs to the ABC transporter superfamily. Phosphate importer (TC 3.A.1.7) family. In terms of assembly, the complex is composed of two ATP-binding proteins (PstB), two transmembrane proteins (PstC and PstA) and a solute-binding protein (PstS).

The protein resides in the cell inner membrane. The enzyme catalyses phosphate(out) + ATP + H2O = ADP + 2 phosphate(in) + H(+). Its function is as follows. Part of the ABC transporter complex PstSACB involved in phosphate import. Responsible for energy coupling to the transport system. The protein is Phosphate import ATP-binding protein PstB of Syntrophotalea carbinolica (strain DSM 2380 / NBRC 103641 / GraBd1) (Pelobacter carbinolicus).